Consider the following 312-residue polypeptide: Methionyl-tRNA formyltransferase (312 aa).

Residue 109 to 112 coordinates (6S)-5,6,7,8-tetrahydrofolate; that stretch reads SLLP.

This sequence belongs to the Fmt family.

It catalyses the reaction L-methionyl-tRNA(fMet) + (6R)-10-formyltetrahydrofolate = N-formyl-L-methionyl-tRNA(fMet) + (6S)-5,6,7,8-tetrahydrofolate + H(+). Functionally, attaches a formyl group to the free amino group of methionyl-tRNA(fMet). The formyl group appears to play a dual role in the initiator identity of N-formylmethionyl-tRNA by promoting its recognition by IF2 and preventing the misappropriation of this tRNA by the elongation apparatus. In Anaeromyxobacter dehalogenans (strain 2CP-C), this protein is Methionyl-tRNA formyltransferase.